A 348-amino-acid chain; its full sequence is Phosphate acyltransferase (348 aa).

Belongs to the PlsX family. As to quaternary structure, homodimer. Probably interacts with PlsY.

Its subcellular location is the cytoplasm. The enzyme catalyses a fatty acyl-[ACP] + phosphate = an acyl phosphate + holo-[ACP]. The protein operates within lipid metabolism; phospholipid metabolism. Its function is as follows. Catalyzes the reversible formation of acyl-phosphate (acyl-PO(4)) from acyl-[acyl-carrier-protein] (acyl-ACP). This enzyme utilizes acyl-ACP as fatty acyl donor, but not acyl-CoA. In Rhizobium leguminosarum bv. trifolii (strain WSM2304), this protein is Phosphate acyltransferase.